The chain runs to 292 residues: Formamidopyrimidine-DNA glycosylase (292 aa).

Proline 2 functions as the Schiff-base intermediate with DNA in the catalytic mechanism. The Proton donor role is filled by glutamate 3. Lysine 60 acts as the Proton donor; for beta-elimination activity in catalysis. DNA is bound by residues histidine 109, arginine 128, and lysine 173. Residues 258-292 (NVYRRTGKKCRQCKNLIERQKISGRSTHWCRKCQK) form an FPG-type zinc finger. Catalysis depends on arginine 282, which acts as the Proton donor; for delta-elimination activity.

This sequence belongs to the FPG family. Monomer. Requires Zn(2+) as cofactor.

The catalysed reaction is Hydrolysis of DNA containing ring-opened 7-methylguanine residues, releasing 2,6-diamino-4-hydroxy-5-(N-methyl)formamidopyrimidine.. The enzyme catalyses 2'-deoxyribonucleotide-(2'-deoxyribose 5'-phosphate)-2'-deoxyribonucleotide-DNA = a 3'-end 2'-deoxyribonucleotide-(2,3-dehydro-2,3-deoxyribose 5'-phosphate)-DNA + a 5'-end 5'-phospho-2'-deoxyribonucleoside-DNA + H(+). Its function is as follows. Involved in base excision repair of DNA damaged by oxidation or by mutagenic agents. Acts as a DNA glycosylase that recognizes and removes damaged bases. Has a preference for oxidized purines, such as 7,8-dihydro-8-oxoguanine (8-oxoG). Has AP (apurinic/apyrimidinic) lyase activity and introduces nicks in the DNA strand. Cleaves the DNA backbone by beta-delta elimination to generate a single-strand break at the site of the removed base with both 3'- and 5'-phosphates. The polypeptide is Formamidopyrimidine-DNA glycosylase (Prochlorococcus marinus subsp. pastoris (strain CCMP1986 / NIES-2087 / MED4)).